Here is a 224-residue protein sequence, read N- to C-terminus: EF-hand calcium-binding domain-containing protein 1 (224 aa).

The N-terminal stretch at 1 to 21 (MKVSLLLLALVLVCLVQGSES) is a signal peptide. The 36-residue stretch at 115 to 150 (IAHPDFMKAYSIADVDGDGELSPKEFYNGPYVFEMD) folds into the EF-hand domain. Residues D128, D130, D132, E134, and E139 each contribute to the Ca(2+) site.

As to expression, component of the acid-soluble organic matrix of calcified layers of the shell (at protein level).

It is found in the secreted. The polypeptide is EF-hand calcium-binding domain-containing protein 1 (Lottia gigantea (Giant owl limpet)).